The sequence spans 232 residues: Aquaporin Z 2 (232 aa).

2 helical membrane passes run 9–29 (FLGT…ASAF) and 32–52 (VGIG…TMAY). The NPA 1 signature appears at 63-65 (NPA). Transmembrane regions (helical) follow at residues 82–102 (VSYV…LYVI), 129–149 (LTAA…IILG), and 158–178 (GFAP…SIPV). An NPA 2 motif is present at residues 184–186 (NPA). The chain crosses the membrane as a helical span at residues 200-220 (LSQLWLFWIAPLFGAAIAGIV).

The protein belongs to the MIP/aquaporin (TC 1.A.8) family. In terms of assembly, homotetramer.

Its subcellular location is the cell inner membrane. The enzyme catalyses H2O(in) = H2O(out). Channel that permits osmotically driven movement of water in both directions. It is involved in the osmoregulation and in the maintenance of cell turgor during volume expansion in rapidly growing cells. It mediates rapid entry or exit of water in response to abrupt changes in osmolarity. This Rhizobium meliloti (strain 1021) (Ensifer meliloti) protein is Aquaporin Z 2.